Here is a 159-residue protein sequence, read N- to C-terminus: NAD(P)H-quinone oxidoreductase subunit J, chloroplastic (159 aa).

The protein belongs to the complex I 30 kDa subunit family. In terms of assembly, NDH is composed of at least 16 different subunits, 5 of which are encoded in the nucleus.

Its subcellular location is the plastid. The protein resides in the chloroplast thylakoid membrane. It catalyses the reaction a plastoquinone + NADH + (n+1) H(+)(in) = a plastoquinol + NAD(+) + n H(+)(out). It carries out the reaction a plastoquinone + NADPH + (n+1) H(+)(in) = a plastoquinol + NADP(+) + n H(+)(out). In terms of biological role, NDH shuttles electrons from NAD(P)H:plastoquinone, via FMN and iron-sulfur (Fe-S) centers, to quinones in the photosynthetic chain and possibly in a chloroplast respiratory chain. The immediate electron acceptor for the enzyme in this species is believed to be plastoquinone. Couples the redox reaction to proton translocation, and thus conserves the redox energy in a proton gradient. The sequence is that of NAD(P)H-quinone oxidoreductase subunit J, chloroplastic from Agrostis stolonifera (Creeping bentgrass).